The primary structure comprises 219 residues: Orotate phosphoribosyltransferase (219 aa).

K26 lines the 5-phospho-alpha-D-ribose 1-diphosphate pocket. Residue 34-35 (FF) participates in orotate binding. 5-phospho-alpha-D-ribose 1-diphosphate contacts are provided by residues 72–73 (YK), R98, K99, K102, H104, and 124–132 (DDVITAGTA). Positions 128 and 156 each coordinate orotate.

The protein belongs to the purine/pyrimidine phosphoribosyltransferase family. PyrE subfamily. Homodimer. Mg(2+) serves as cofactor.

It carries out the reaction orotidine 5'-phosphate + diphosphate = orotate + 5-phospho-alpha-D-ribose 1-diphosphate. Its pathway is pyrimidine metabolism; UMP biosynthesis via de novo pathway; UMP from orotate: step 1/2. Functionally, catalyzes the transfer of a ribosyl phosphate group from 5-phosphoribose 1-diphosphate to orotate, leading to the formation of orotidine monophosphate (OMP). This Xylella fastidiosa (strain Temecula1 / ATCC 700964) protein is Orotate phosphoribosyltransferase.